The sequence spans 414 residues: Methyltransferase-like protein 2 (414 aa).

Residues 56 to 77 (LNQHSSESNPKKRKRKQKNSSF) form a disordered region.

The protein belongs to the MT-A70-like family.

Its function is as follows. Probable methyltransferase. This is Methyltransferase-like protein 2 from Arabidopsis thaliana (Mouse-ear cress).